Consider the following 490-residue polypeptide: One cut domain family member 3 (490 aa).

Disordered stretches follow at residues 130-155 (GAHG…QRLA), 193-213 (LSPL…PPPP), and 287-316 (HGPH…AAAE). The segment covering 143–152 (ATAPPPPPPQ) has biased composition (pro residues). Residues 290-311 (HSGGGGPGGGGGAGGGSGGPGA) are compositionally biased toward gly residues. A DNA-binding region (CUT) is located at residues 309-395 (PGAGAAAEEI…QRMSALRLAA (87 aa)). Positions 411-470 (PKKQRLVFTDLQRRTLIAIFKENKRPSKEMQATISQQLGLELNTVSNFFMNARRRCMNRW) form a DNA-binding region, homeobox.

Belongs to the CUT homeobox family. In terms of tissue distribution, specifically expressed in brain, stomach and gut. Within the gut, expressed only in duodenum and jejunum.

The protein resides in the nucleus. In terms of biological role, transcriptional activator. Binds the consensus DNA sequence 5'-DHWATTGAYTWWD-3' on a variety of gene promoters such as those of HNF3B and TTR. The sequence is that of One cut domain family member 3 (Onecut3) from Mus musculus (Mouse).